Here is a 1438-residue protein sequence, read N- to C-terminus: MRDEATRKKRSFSDGHFFKKLKLMSRKKQPVMERSKTTRTRKESTNSAAKSSLSLRRANNGRKTIAKRRVLTDIGSTNEGVAGNSGSNSPAQYSHTPHFSDSIPPLPLELPDIVSIRSSRSHISNKSNKNKHGIDLTFIPRRSLQNSKAGLKKPNTSPQGYFNIPVTIDRASEKVKHTDTKNTFNSSSSENERPVLSILQKDDSQSSSHPAIDSMSAPNNINNNNDIENSSNSLFDTILSIAHSAISHVPKISALNTEIQREFSHSGESHTGSTRHPYFHIHHAQQQHPLSQQQGPLPVSENANQNPNDTVLIHSPSANTAHRSSSFLRHLDYLLSPTSGPASDKHTQVEEGDDEEELSPLSKAFLSPSTQLVPTNTSTTPLSGSLTPNNRNVNANSNSETENDNDRDDRSNVGKVKFQPLKVHEPAISTFGKGNLTLEAVAGSSDIDNTTIDLDENNTNNNPNASSTNLSHISKSNVNNNLGPKELNTSYRNSTYIDMARFENSQSNLSSHRARSKTLPANKALENAVGDEGNSKRNSRYSSYSNDMAFDDADERKFRSMSKKFLNRRSFSPSNLGNKVIPGINLRNSFNKNRNSSSDFFSTNQGQQMPRTSTAGSGNIHAIMGLDSGNDDFKLEGIEYASEKKNSEFHTLFKDCDINPNEKLIVDHSCALSRDILLQGRMYISDAHIGFFSNILGWVSTVFIPFKEIVQIEKKTTAGIFPNGIVIDTLHTKYIFASFMSRDATFDLITDVWNQIILGKKYRNGFGNNDDGTISDSSSAFFDDSDDNDDDGDLDDDDPDINSTDMTSSDDIDADVFNESNDLGKNQKSTNYLLGPNKHSPTTADFKPSNNDHLVIEANINAPLGKVVNLLYGEDVSYYERILKAQKNFEISPIPNNFLTKKIRDYAYTKPLSGSIGPSKTKCLITDTLEHYDLEDYVKVLSITKNPDVPSGNIFSVKTVFLFSWDKNNSTKLTVYNSVDWTGKSWIKSMIEKGTFDGVADTTKIMISEIKKILSDEDSNINSKHQASNNESEEEIINLPTIGPPVHDPTEPDFQKGKDDTVIDEKINIPVPLGTVFSLLYGDDTSYIKKIIENQNNFNVCDIPKFVNNAREITYTKKLNNSFGPKQTKCIVTETIEHMDLNSFFMVKQIVRSPDVPYGSSFSVHTRFFYSWGDHNTTNMKVVTNVVWTGKSMLKGTIEKGSIDGQRSSTKQLVDDLKKIISNASSTKKKSRRRGKTVNKRKSSPSTIKNEKNEENFEDTSTKNSFFSAFSMLQQVNITSVQGIMTIISFFICLIFFFRLLFHSKNTSNIQIITPGTILINGNEYNYVPNFKTLYHVYEDNIIKDARRKDSNKNNIVTDTEGLIWDWLIDRGNGTVQNSVLSNHIKESNNKKVKLVNGVSDHKIQQLVESIKITELQLQEMKELLAQTDNTSATNQLL.

Residues 1 to 17 (MRDEATRKKRSFSDGHF) are compositionally biased toward basic and acidic residues. Disordered stretches follow at residues 1 to 97 (MRDE…SHTP), 174 to 194 (KVKH…NERP), 200 to 219 (QKDD…SAPN), 285 to 308 (QQQH…QNPN), 338 to 418 (TSGP…KVKF), 455 to 485 (DENN…LGPK), and 505 to 543 (SQSN…RYSS). The Cytoplasmic portion of the chain corresponds to 1–1277 (MRDEATRKKR…SAFSMLQQVN (1277 aa)). Ser13 carries the phosphoserine modification. A compositionally biased stretch (basic residues) spans 18–29 (FKKLKLMSRKKQ). Residues 30–44 (PVMERSKTTRTRKES) show a composition bias toward basic and acidic residues. Over residues 45-58 (TNSAAKSSLSLRRA) the composition is skewed to low complexity. Over residues 74 to 97 (IGSTNEGVAGNSGSNSPAQYSHTP) the composition is skewed to polar residues. Composition is skewed to low complexity over residues 286 to 298 (QQHP…GPLP) and 374 to 398 (PTNT…ANSN). The residue at position 411 (Ser411) is a Phosphoserine. The segment covering 455-470 (DENNTNNNPNASSTNL) has biased composition (low complexity). Over residues 471–485 (SHISKSNVNNNLGPK) the composition is skewed to polar residues. Ser596 bears the Phosphoserine mark. The GRAM domain occupies 648-716 (EFHTLFKDCD…KEIVQIEKKT (69 aa)). Positions 777 to 843 (SSSAFFDDSD…LGPNKHSPTT (67 aa)) are disordered. Over residues 783–800 (DDSDDNDDDGDLDDDDPD) the composition is skewed to acidic residues. Residues 818-832 (NESNDLGKNQKSTNY) show a composition bias toward polar residues. Residues 851–1018 (NDHLVIEANI…EIKKILSDED (168 aa)) form the VASt 1 domain. Ser1032 is subject to Phosphoserine. The region spanning 1059 to 1225 (DDTVIDEKIN…DLKKIISNAS (167 aa)) is the VASt 2 domain. A disordered region spans residues 1225–1257 (SSTKKKSRRRGKTVNKRKSSPSTIKNEKNEENF). Positions 1227–1243 (TKKKSRRRGKTVNKRKS) are enriched in basic residues. The helical transmembrane segment at 1278 to 1298 (ITSVQGIMTIISFFICLIFFF) threads the bilayer. At 1299-1438 (RLLFHSKNTS…DNTSATNQLL (140 aa)) the chain is on the lumenal side. 3 N-linked (GlcNAc...) asparagine glycosylation sites follow: Asn1306, Asn1373, and Asn1430.

This sequence belongs to the YSP2 family.

Its subcellular location is the mitochondrion membrane. It is found in the endoplasmic reticulum membrane. In terms of biological role, involved in induction of programmed cell death in response to reactive oxygen species (ROS). May be involved in sterol transfer between intracellular membranes. The sequence is that of Membrane-anchored lipid-binding protein YSP2 from Saccharomyces cerevisiae (strain ATCC 204508 / S288c) (Baker's yeast).